Consider the following 66-residue polypeptide: Large ribosomal subunit protein bL35 (66 aa).

The segment covering Met-1–His-26 has biased composition (basic residues). The interval Met-1–Tyr-28 is disordered.

This sequence belongs to the bacterial ribosomal protein bL35 family.

This Geobacillus thermodenitrificans (strain NG80-2) protein is Large ribosomal subunit protein bL35.